The primary structure comprises 185 residues: Elongation factor P (185 aa).

Belongs to the elongation factor P family.

The protein localises to the cytoplasm. It participates in protein biosynthesis; polypeptide chain elongation. Functionally, involved in peptide bond synthesis. Stimulates efficient translation and peptide-bond synthesis on native or reconstituted 70S ribosomes in vitro. Probably functions indirectly by altering the affinity of the ribosome for aminoacyl-tRNA, thus increasing their reactivity as acceptors for peptidyl transferase. This Burkholderia cenocepacia (strain HI2424) protein is Elongation factor P.